The following is a 571-amino-acid chain: Proline--tRNA ligase (571 aa).

This sequence belongs to the class-II aminoacyl-tRNA synthetase family. ProS type 1 subfamily. As to quaternary structure, homodimer.

Its subcellular location is the cytoplasm. The enzyme catalyses tRNA(Pro) + L-proline + ATP = L-prolyl-tRNA(Pro) + AMP + diphosphate. Its function is as follows. Catalyzes the attachment of proline to tRNA(Pro) in a two-step reaction: proline is first activated by ATP to form Pro-AMP and then transferred to the acceptor end of tRNA(Pro). As ProRS can inadvertently accommodate and process non-cognate amino acids such as alanine and cysteine, to avoid such errors it has two additional distinct editing activities against alanine. One activity is designated as 'pretransfer' editing and involves the tRNA(Pro)-independent hydrolysis of activated Ala-AMP. The other activity is designated 'posttransfer' editing and involves deacylation of mischarged Ala-tRNA(Pro). The misacylated Cys-tRNA(Pro) is not edited by ProRS. The protein is Proline--tRNA ligase of Proteus mirabilis (strain HI4320).